The sequence spans 213 residues: Large ribosomal subunit protein uL1 (213 aa).

Belongs to the universal ribosomal protein uL1 family. In terms of assembly, part of the 50S ribosomal subunit.

Functionally, binds directly to 23S rRNA. Probably involved in E site tRNA release. Protein L1 is also a translational repressor protein, it controls the translation of its operon by binding to its mRNA. This chain is Large ribosomal subunit protein uL1, found in Methanosarcina acetivorans (strain ATCC 35395 / DSM 2834 / JCM 12185 / C2A).